The sequence spans 403 residues: Calcium-responsive transactivator (403 aa).

Residues 1-148 form an N-terminal auto-inhibitory domain region; it reads MSVAFASARP…TLPTTTMSMA (148 aa). The SH2-binding motif lies at 50-53; it reads YQQI. Disordered stretches follow at residues 72 to 111, 152 to 171, 224 to 303, and 318 to 403; these read QSLL…ALGS, HGSA…VPMQ, NQSS…RTFE, and SQQQ…NYQQ. Polar residues-rich tracts occupy residues 92–105 and 161–171; these read QTGP…QGNL and TVPSSQNVPMQ. A methionine-rich intra-molecular domain region spans residues 149 to 238; the sequence is VSTHGSAPGY…GSSMMGQRPL (90 aa). Over residues 224-235 the composition is skewed to low complexity; sequence NQSSQGSSMMGQ. The interval 252–324 is MFD domain; sequence YLGQEEYYSE…AQYSQQQTGY (73 aa). The span at 263 to 277 shows a compositional bias: polar residues; that stretch reads YGHSQGSSEAMTPQY. Low complexity predominate over residues 286-296; that stretch reads YSYQQSSYGEQ. A necessary for nuclear localization region spans residues 341–403; it reads NQQNYPGQQQ…EQGQYGNYQQ (63 aa). Residues 360 to 363 carry the SH2-binding motif; sequence SQYS. The SH3-binding signature appears at 378 to 386; it reads TSQTTSTAQ. Positions 398–401 match the SH2-binding motif; the sequence is YGNY.

Belongs to the SS18 family. As to quaternary structure, homodimer.

The protein resides in the nucleus. Transcriptional activator which may be required for calcium-dependent dendritic growth and branching in cortical neurons. The chain is Calcium-responsive transactivator (ss18l1) from Xenopus laevis (African clawed frog).